A 359-amino-acid chain; its full sequence is 3-dehydroquinate synthase (359 aa).

NAD(+) is bound by residues 69-74 (DGEAYK), 103-107 (GVIGD), 127-128 (TT), Lys140, Lys149, and 167-170 (CLKT). Zn(2+) contacts are provided by Glu182, His245, and His262.

Belongs to the sugar phosphate cyclases superfamily. Dehydroquinate synthase family. Requires Co(2+) as cofactor. Zn(2+) is required as a cofactor. The cofactor is NAD(+).

It localises to the cytoplasm. The enzyme catalyses 7-phospho-2-dehydro-3-deoxy-D-arabino-heptonate = 3-dehydroquinate + phosphate. It functions in the pathway metabolic intermediate biosynthesis; chorismate biosynthesis; chorismate from D-erythrose 4-phosphate and phosphoenolpyruvate: step 2/7. Catalyzes the conversion of 3-deoxy-D-arabino-heptulosonate 7-phosphate (DAHP) to dehydroquinate (DHQ). In Aeromonas salmonicida (strain A449), this protein is 3-dehydroquinate synthase.